Reading from the N-terminus, the 227-residue chain is Probable cytokinin riboside 5'-monophosphate phosphoribohydrolase LOGL9 (227 aa).

A compositionally biased stretch (polar residues) spans 1 to 15; the sequence is MYISSPHTSHFTSID. The interval 1 to 26 is disordered; that stretch reads MYISSPHTSHFTSIDRSPAVVSESDR. Substrate is bound by residues Glu-117, 135 to 136, and 152 to 158; these read RK and GYGTLEE.

The protein belongs to the LOG family. In terms of tissue distribution, expressed in roots, leaves and stems.

The enzyme catalyses N(6)-(dimethylallyl)adenosine 5'-phosphate + H2O = N(6)-dimethylallyladenine + D-ribose 5-phosphate. It catalyses the reaction 9-ribosyl-trans-zeatin 5'-phosphate + H2O = trans-zeatin + D-ribose 5-phosphate. In terms of biological role, cytokinin-activating enzyme working in the direct activation pathway. Phosphoribohydrolase that converts inactive cytokinin nucleotides to the biologically active free-base forms. This is Probable cytokinin riboside 5'-monophosphate phosphoribohydrolase LOGL9 (LOGL9) from Oryza sativa subsp. japonica (Rice).